Consider the following 179-residue polypeptide: Embryo-specific protein ATS3A (179 aa).

The first 22 residues, methionine 1–alanine 22, serve as a signal peptide directing secretion. Residues cysteine 48 to cysteine 158 form the PLAT domain.

Interacts with EULS3 (via N-terminus). In terms of tissue distribution, expressed in roots, rosette leaves, stems, cauline leaves and flowers.

The protein resides in the secreted. May play a role during embryo development. The polypeptide is Embryo-specific protein ATS3A (Arabidopsis thaliana (Mouse-ear cress)).